The chain runs to 360 residues: Nicotinate-nucleotide--dimethylbenzimidazole phosphoribosyltransferase (360 aa).

The active-site Proton acceptor is E327.

The protein belongs to the CobT family.

The catalysed reaction is 5,6-dimethylbenzimidazole + nicotinate beta-D-ribonucleotide = alpha-ribazole 5'-phosphate + nicotinate + H(+). It functions in the pathway nucleoside biosynthesis; alpha-ribazole biosynthesis; alpha-ribazole from 5,6-dimethylbenzimidazole: step 1/2. Functionally, catalyzes the synthesis of alpha-ribazole-5'-phosphate from nicotinate mononucleotide (NAMN) and 5,6-dimethylbenzimidazole (DMB). This chain is Nicotinate-nucleotide--dimethylbenzimidazole phosphoribosyltransferase, found in Shewanella baltica (strain OS155 / ATCC BAA-1091).